Reading from the N-terminus, the 612-residue chain is Dihydroxy-acid dehydratase (612 aa).

D81 is a binding site for Mg(2+). Residue C122 coordinates [2Fe-2S] cluster. Residues D123 and K124 each contribute to the Mg(2+) site. N6-carboxylysine is present on K124. Residue C193 coordinates [2Fe-2S] cluster. E489 provides a ligand contact to Mg(2+). The Proton acceptor role is filled by S515.

Belongs to the IlvD/Edd family. In terms of assembly, homodimer. [2Fe-2S] cluster serves as cofactor. It depends on Mg(2+) as a cofactor.

The catalysed reaction is (2R)-2,3-dihydroxy-3-methylbutanoate = 3-methyl-2-oxobutanoate + H2O. It carries out the reaction (2R,3R)-2,3-dihydroxy-3-methylpentanoate = (S)-3-methyl-2-oxopentanoate + H2O. Its pathway is amino-acid biosynthesis; L-isoleucine biosynthesis; L-isoleucine from 2-oxobutanoate: step 3/4. The protein operates within amino-acid biosynthesis; L-valine biosynthesis; L-valine from pyruvate: step 3/4. Functionally, functions in the biosynthesis of branched-chain amino acids. Catalyzes the dehydration of (2R,3R)-2,3-dihydroxy-3-methylpentanoate (2,3-dihydroxy-3-methylvalerate) into 2-oxo-3-methylpentanoate (2-oxo-3-methylvalerate) and of (2R)-2,3-dihydroxy-3-methylbutanoate (2,3-dihydroxyisovalerate) into 2-oxo-3-methylbutanoate (2-oxoisovalerate), the penultimate precursor to L-isoleucine and L-valine, respectively. This is Dihydroxy-acid dehydratase from Xanthomonas campestris pv. campestris (strain 8004).